The following is a 589-amino-acid chain: Protein sprouty (589 aa).

3 disordered regions span residues 1 to 37, 102 to 194, and 239 to 320; these read MDRR…GVDH, RPSS…RPES, and LHLQ…MGLG. Low complexity-rich tracts occupy residues 104-135 and 148-162; these read SSLS…SSSS and NNSI…INNN. Positions 163 to 172 are enriched in polar residues; the sequence is FLSHFQSAEP. The span at 239–272 shows a compositional bias: low complexity; sequence LHLQQHQQHLQQQQQQQQQQQQQQHLQHQQNQQH. A compositionally biased stretch (polar residues) spans 276–286; that stretch reads ATTTQATSVGS. An SPR domain is found at 380–499; the sequence is RCGRCRCEQC…CYGRFAGRGC (120 aa).

It belongs to the sprouty family. As to quaternary structure, interacts with DRK and RasGAP1 proteins of the Ras pathway. In ovary, expressed from stage 7 of oogenesis in the posterior follicle cells and during stage 9 when the follicle cells migrate posteriorly over the oocyte nucleus, expression is seen in the dorsal and lateral cells and is excluded from the ventral cells. Once the migration of follicle cells is complete expressed in the dorsal-anterior corner of the egg chamber. Expressed in the embryonic tracheal system, developing eye imaginal disk, embryonic chordotonal organ precursors, midline glia and wing imaginal disk.

The protein resides in the cell membrane. Functionally, inhibitor of tracheal branching that restricts branch budding by antagonizing the BNL-FGF pathway (BNL: branchless, an fgf inducer of branching). Acts as an antagonist of EGFR-mediated signaling in the eye (where it is important for cell determination) midline glia, chordotonal organs, wing and ovarian follicle cells. This chain is Protein sprouty (sty), found in Drosophila melanogaster (Fruit fly).